The following is a 262-amino-acid chain: 3-deoxy-manno-octulosonate cytidylyltransferase (262 aa).

It belongs to the KdsB family.

The protein resides in the cytoplasm. It carries out the reaction 3-deoxy-alpha-D-manno-oct-2-ulosonate + CTP = CMP-3-deoxy-beta-D-manno-octulosonate + diphosphate. It participates in nucleotide-sugar biosynthesis; CMP-3-deoxy-D-manno-octulosonate biosynthesis; CMP-3-deoxy-D-manno-octulosonate from 3-deoxy-D-manno-octulosonate and CTP: step 1/1. It functions in the pathway bacterial outer membrane biogenesis; lipopolysaccharide biosynthesis. Its function is as follows. Activates KDO (a required 8-carbon sugar) for incorporation into bacterial lipopolysaccharide in Gram-negative bacteria. In Acidovorax sp. (strain JS42), this protein is 3-deoxy-manno-octulosonate cytidylyltransferase.